The chain runs to 354 residues: Ferrochelatase (354 aa).

Residues histidine 214 and glutamate 295 each coordinate Fe cation.

This sequence belongs to the ferrochelatase family.

It is found in the cytoplasm. The catalysed reaction is heme b + 2 H(+) = protoporphyrin IX + Fe(2+). It functions in the pathway porphyrin-containing compound metabolism; protoheme biosynthesis; protoheme from protoporphyrin-IX: step 1/1. Functionally, catalyzes the ferrous insertion into protoporphyrin IX. This Burkholderia lata (strain ATCC 17760 / DSM 23089 / LMG 22485 / NCIMB 9086 / R18194 / 383) protein is Ferrochelatase.